We begin with the raw amino-acid sequence, 242 residues long: MSEDINNNLNNSDNSNGSNEKIIVGLDEAGRGPVLGPMVIASVKIDEKNLYKLNDLELKDSKQLSKKKREELYIIINEMCDVEKIVIDPETIDKQMEIINLNKIELSAFSKLSNHFIRENDNISIYIDACSSSEQSFSNQFKAKLINKNVEIIAEHKADENYKIVSAASIIAKVTRDRVIEEYKETFGEIGSGYPSDPKTKKFLKNYVYENRTLPKIARKSWATSKNLLKEIEESKIFQWVK.

Residues 21–234 (KIIVGLDEAG…SKNLLKEIEE (214 aa)) enclose the RNase H type-2 domain. A divalent metal cation is bound by residues Asp27, Glu28, and Asp128.

The protein belongs to the RNase HII family. Mn(2+) serves as cofactor. It depends on Mg(2+) as a cofactor.

The protein localises to the cytoplasm. The enzyme catalyses Endonucleolytic cleavage to 5'-phosphomonoester.. Functionally, endonuclease that specifically degrades the RNA of RNA-DNA hybrids. This Methanococcus maripaludis (strain DSM 14266 / JCM 13030 / NBRC 101832 / S2 / LL) protein is Ribonuclease HII.